Consider the following 565-residue polypeptide: METTTKKARSLYIPYAGPVLLEFPLLNKGSAFSVEERRNFNLSGLLPEVVESIEEQAERAWLQYQGFKTEIDKHIYLRNIQDTNETLFYRLVQNHLEEMMPVIYTPTVGAACERFSEIYRRARGVFISYPNRHNMDDILQNVPNHNIKVIVVTDGERILGLGDQGIGGMGIPIGKLSLYTACGGISPAYTLPVVLDVGTNNQQLLNDPLYMGWRHPRITDDEYYAFVDEFIQAVKQRWPDILLQFEDFAQKNAMPLLTRYRDEICSFNDDIQGTAAVTVGTLIAASRAAGSQLSEQKIVFLGAGSAGCGIAEQIIAQTQREGLSEDAARQNVFMVDRFGLLTDRMPNLLPFQAKLVQKCDNLQHWDTENDVLSLLDVVRNVKPDILIGVSGQTGLFTEEIIREMHKHCPRPIVMPLSNPTSRVEATPQDIIVWTEGNALVATGSPFSPVIWKDKVYPIAQCNNAYIFPGIGLGVIASGASRITDEMLMSASETLAKHSPLVNNGEGLVLPALKDIQVVSRAIAFAVGKMAQQQGVAVKTSAEALQQAIDDNFWKPEYRDYRRTSI.

Y104 acts as the Proton donor in catalysis. An NAD(+)-binding site is contributed by R157. The active-site Proton acceptor is K175. Positions 246, 247, and 270 each coordinate a divalent metal cation. Positions 270 and 418 each coordinate NAD(+).

This sequence belongs to the malic enzymes family. In terms of assembly, homotetramer. Mg(2+) is required as a cofactor. The cofactor is Mn(2+).

It carries out the reaction (S)-malate + NAD(+) = pyruvate + CO2 + NADH. It catalyses the reaction oxaloacetate + H(+) = pyruvate + CO2. The protein is NAD-dependent malic enzyme of Salmonella choleraesuis (strain SC-B67).